Here is a 161-residue protein sequence, read N- to C-terminus: RNA pyrophosphohydrolase (161 aa).

Residues 12–154 (PYRIGVGMVI…KRKLYKAVIN (143 aa)) form the Nudix hydrolase domain. The Nudix box signature appears at 46-67 (GGIILGETYSKAVLREMKEEIG).

It belongs to the Nudix hydrolase family. RppH subfamily. The cofactor is a divalent metal cation.

In terms of biological role, accelerates the degradation of transcripts by removing pyrophosphate from the 5'-end of triphosphorylated RNA, leading to a more labile monophosphorylated state that can stimulate subsequent ribonuclease cleavage. This is RNA pyrophosphohydrolase from Orientia tsutsugamushi (strain Boryong) (Rickettsia tsutsugamushi).